A 359-amino-acid chain; its full sequence is Biotin synthase (359 aa).

The Radical SAM core domain maps to 47 to 276 (HHGRRVRIHV…EADLRMAGGR (230 aa)). The [4Fe-4S] cluster site is built by Cys-65, Cys-69, and Cys-72. [2Fe-2S] cluster contacts are provided by Cys-109, Cys-141, Cys-201, and Arg-271. Positions 320–359 (EPVIVEDGPERQTPATADDTPSGDPEAADRRRQPSAGPAG) are disordered.

It belongs to the radical SAM superfamily. Biotin synthase family. As to quaternary structure, homodimer. The cofactor is [4Fe-4S] cluster. It depends on [2Fe-2S] cluster as a cofactor.

It carries out the reaction (4R,5S)-dethiobiotin + (sulfur carrier)-SH + 2 reduced [2Fe-2S]-[ferredoxin] + 2 S-adenosyl-L-methionine = (sulfur carrier)-H + biotin + 2 5'-deoxyadenosine + 2 L-methionine + 2 oxidized [2Fe-2S]-[ferredoxin]. It functions in the pathway cofactor biosynthesis; biotin biosynthesis; biotin from 7,8-diaminononanoate: step 2/2. In terms of biological role, catalyzes the conversion of dethiobiotin (DTB) to biotin by the insertion of a sulfur atom into dethiobiotin via a radical-based mechanism. The polypeptide is Biotin synthase (Salinibacter ruber (strain DSM 13855 / M31)).